Here is a 340-residue protein sequence, read N- to C-terminus: Glutamine synthetase (340 aa).

A GS beta-grasp domain is found at 3 to 82; sequence IKAEYIWIDG…LCEVLHTDLT (80 aa). A GS catalytic domain is found at 88 to 340; it reads TRALLRPVAE…CTELARREQI (253 aa). The Mg(2+) site is built by glutamate 109, glutamate 111, glutamate 171, and glutamate 178. An L-glutamate-binding site is contributed by glutamate 276.

Belongs to the glutamine synthetase family. Homooctamer and homotetramer. Mg(2+) serves as cofactor.

The protein localises to the cytoplasm. It catalyses the reaction L-glutamate + NH4(+) + ATP = L-glutamine + ADP + phosphate + H(+). Its function is as follows. Catalyzes the ATP-dependent biosynthesis of glutamine from glutamate and ammonia. The polypeptide is Glutamine synthetase (Streptomyces hygroscopicus).